The following is a 219-amino-acid chain: Thiopurine S-methyltransferase (219 aa).

The S-adenosyl-L-methionine site is built by Trp-10, Leu-45, Glu-66, and Arg-123.

This sequence belongs to the class I-like SAM-binding methyltransferase superfamily. TPMT family.

Its subcellular location is the cytoplasm. The catalysed reaction is S-adenosyl-L-methionine + a thiopurine = S-adenosyl-L-homocysteine + a thiopurine S-methylether.. The sequence is that of Thiopurine S-methyltransferase from Bordetella bronchiseptica (strain ATCC BAA-588 / NCTC 13252 / RB50) (Alcaligenes bronchisepticus).